We begin with the raw amino-acid sequence, 1136 residues long: Phytochrome (1136 aa).

Positions 1–28 (MSTTRPRAATHSASSGSVSRSSKHSARV) are disordered. Residues 11-20 (HSASSGSVSR) show a composition bias toward low complexity. Residues 231 to 414 (DIRLLCDTVV…VFGIQLNKEV (184 aa)) form the GAF domain. Phytochromobilin is bound at residue Cys-336. 2 consecutive PAS domains span residues 629–699 (VTNE…LQGE) and 762–833 (DYRA…TKLR). The region spanning 913-1132 (YIRQEIRNPL…IINVEFPLAQ (220 aa)) is the Histidine kinase domain.

Belongs to the phytochrome family. As to quaternary structure, homodimer. Contains one covalently linked phytochromobilin chromophore.

In terms of biological role, regulatory photoreceptor which exists in two forms that are reversibly interconvertible by light: the Pr form that absorbs maximally in the red region of the spectrum and the Pfr form that absorbs maximally in the far-red region. Photoconversion of Pr to Pfr induces an array of morphogenic responses, whereas reconversion of Pfr to Pr cancels the induction of those responses. Pfr controls the expression of a number of nuclear genes including those encoding the small subunit of ribulose-bisphosphate carboxylase, chlorophyll A/B binding protein, protochlorophyllide reductase, rRNA, etc. It also controls the expression of its own gene(s) in a negative feedback fashion. The sequence is that of Phytochrome from Picea abies (Norway spruce).